The sequence spans 469 residues: MSAVMTPAGFTDYKVADITLAAWGRRELIIAESEMPALMGLRRKYAGQQPLKGAKILGCIHMTIQTGVLIETLVALGAEVRWSSCNIFSTQDQAAAAIAAAGIPVFAWKGETEEEYEWCIEQTILKDGQPWDANMVLDDGGDLTEILHKKYPQMLERIHGITEETTTGVHRLLDMLKNGTLKVPAINVNDSVTKSKNDNKYGCRHSLNDAIKRGTDHLLSGKQALVIGYGDVGKGSSQSLRQEGMIVKVAEVDPICAMQACMDGFEVVSPYKNGINDGTEASIDAALLGKIDLIVTTTGNVNVCDANMLKALKKRAVVCNIGHFDNEIDTAFMRKNWAWEEVKPQVHKIHRTGKDGFDAHNDDYLILLAEGRLVNLGNATGHPSRIMDGSFANQVLAQIHLFEQKYADLPAAEKAKRLSVEVLPKKLDEEVALEMVKGFGGVVTQLTPKQAEYIGVSVEGPFKPDTYRY.

Substrate is bound by residues Thr63, Asp139, and Glu164. Residue 165-167 (TTT) coordinates NAD(+). 2 residues coordinate substrate: Lys194 and Asp198. NAD(+) contacts are provided by residues Asn199, 228 to 233 (GYGDVG), Glu251, Asn300, 321 to 323 (IGH), and Asn375.

This sequence belongs to the adenosylhomocysteinase family. NAD(+) is required as a cofactor.

Its subcellular location is the cytoplasm. The enzyme catalyses S-adenosyl-L-homocysteine + H2O = L-homocysteine + adenosine. Its pathway is amino-acid biosynthesis; L-homocysteine biosynthesis; L-homocysteine from S-adenosyl-L-homocysteine: step 1/1. May play a key role in the regulation of the intracellular concentration of adenosylhomocysteine. This chain is Adenosylhomocysteinase, found in Pseudomonas aeruginosa (strain LESB58).